The primary structure comprises 417 residues: L-rhamnose isomerase (417 aa).

His261, Asp293, and Asp295 together coordinate Mn(2+).

The protein belongs to the rhamnose isomerase family. Requires Mn(2+) as cofactor.

Its subcellular location is the cytoplasm. It carries out the reaction L-rhamnopyranose = L-rhamnulose. It functions in the pathway carbohydrate degradation; L-rhamnose degradation; glycerone phosphate from L-rhamnose: step 1/3. Catalyzes the interconversion of L-rhamnose and L-rhamnulose. The chain is L-rhamnose isomerase from Oceanobacillus iheyensis (strain DSM 14371 / CIP 107618 / JCM 11309 / KCTC 3954 / HTE831).